The primary structure comprises 391 residues: Elongation factor Tu (391 aa).

The tr-type G domain occupies 10-201 (KPHVNIGTIG…AVDEYIPTPA (192 aa)). The G1 stretch occupies residues 19–26 (GHVDHGKT). 19 to 26 (GHVDHGKT) is a binding site for GTP. A Mg(2+)-binding site is contributed by Thr26. The tract at residues 55-59 (GITIS) is G2. Positions 76-79 (DCPG) are G3. Residues 76 to 80 (DCPGH) and 131 to 134 (NKVD) each bind GTP. Residues 131–134 (NKVD) are G4. Residues 169-171 (SAL) form a G5 region.

This sequence belongs to the TRAFAC class translation factor GTPase superfamily. Classic translation factor GTPase family. EF-Tu/EF-1A subfamily. In terms of assembly, monomer.

The protein resides in the cytoplasm. The catalysed reaction is GTP + H2O = GDP + phosphate + H(+). Its function is as follows. GTP hydrolase that promotes the GTP-dependent binding of aminoacyl-tRNA to the A-site of ribosomes during protein biosynthesis. The protein is Elongation factor Tu of Cereibacter sphaeroides (strain ATCC 17025 / ATH 2.4.3) (Rhodobacter sphaeroides).